The sequence spans 101 residues: Small ribosomal subunit protein uS14 (101 aa).

Belongs to the universal ribosomal protein uS14 family. Part of the 30S ribosomal subunit. Contacts proteins S3 and S10.

Binds 16S rRNA, required for the assembly of 30S particles and may also be responsible for determining the conformation of the 16S rRNA at the A site. This Nitrosospira multiformis (strain ATCC 25196 / NCIMB 11849 / C 71) protein is Small ribosomal subunit protein uS14.